The primary structure comprises 964 residues: A-type ATP synthase subunit A (964 aa).

The 127-residue stretch at 392–518 (FLGYLMANGT…LSYLFAKLGI (127 aa)) folds into the DOD-type homing endonuclease domain.

The protein belongs to the ATPase alpha/beta chains family. In terms of assembly, has multiple subunits with at least A(3), B(3), C, D, E, F, H, I and proteolipid K(x). This protein undergoes a protein self splicing that involves a post-translational excision of the VDE intervening region (intein) followed by peptide ligation.

It is found in the cell membrane. It carries out the reaction ATP + H2O + 4 H(+)(in) = ADP + phosphate + 5 H(+)(out). Its function is as follows. Component of the A-type ATP synthase that produces ATP from ADP in the presence of a proton gradient across the membrane. The A chain is the catalytic subunit. In Pyrococcus horikoshii (strain ATCC 700860 / DSM 12428 / JCM 9974 / NBRC 100139 / OT-3), this protein is A-type ATP synthase subunit A.